A 601-amino-acid chain; its full sequence is uncharacterized protein (601 aa).

Residues 24–35 show a composition bias toward basic residues; it reads RKSNVVLKKNKG. Disordered stretches follow at residues 24–106 and 171–219; these read RKSN…LKLD and YGND…PREE. The segment covering 54–81 has biased composition (polar residues); that stretch reads SQFSSRDNFRTTQTQASSSSEPSDNTNR. Positions 92–106 are enriched in basic and acidic residues; sequence TPKKEESNAEKLKLD. Phosphoserine is present on residues serine 236 and serine 238. The disordered stretch occupies residues 260–283; the sequence is RKRKVLSSSSEDDESSSPEDLLKP.

The protein resides in the nucleus. This is an uncharacterized protein from Schizosaccharomyces pombe (strain 972 / ATCC 24843) (Fission yeast).